The sequence spans 353 residues: uncharacterized protein (353 aa).

The interval 69-106 (ISSATPSSTPPATRASSRLQPPKGHQAGGSNSQQQQPS) is disordered. Over residues 70–86 (SSATPSSTPPATRASSR) the composition is skewed to low complexity. A coiled-coil region spans residues 319–353 (GENKEKKMREMSRVYREMTRQMDDTRRDLDRLNQG).

This is an uncharacterized protein from Gibberella zeae (strain ATCC MYA-4620 / CBS 123657 / FGSC 9075 / NRRL 31084 / PH-1) (Wheat head blight fungus).